The following is a 344-amino-acid chain: L-threonine 3-dehydrogenase (344 aa).

Cysteine 42 lines the Zn(2+) pocket. Active-site charge relay system residues include threonine 44 and histidine 47. The Zn(2+) site is built by histidine 67, glutamate 68, cysteine 97, cysteine 100, cysteine 103, and cysteine 111. NAD(+) contacts are provided by residues isoleucine 179, aspartate 199, arginine 204, leucine 266–isoleucine 268, and isoleucine 290–tyrosine 291.

It belongs to the zinc-containing alcohol dehydrogenase family. Homotetramer. It depends on Zn(2+) as a cofactor.

It localises to the cytoplasm. The enzyme catalyses L-threonine + NAD(+) = (2S)-2-amino-3-oxobutanoate + NADH + H(+). The protein operates within amino-acid degradation; L-threonine degradation via oxydo-reductase pathway; glycine from L-threonine: step 1/2. Its function is as follows. Catalyzes the NAD(+)-dependent oxidation of L-threonine to 2-amino-3-ketobutyrate. The sequence is that of L-threonine 3-dehydrogenase from Chelativorans sp. (strain BNC1).